The following is a 143-amino-acid chain: Large ribosomal subunit protein uL15 (143 aa).

The segment at 1–58 (MQLNDLRSAPGARREKHRPGRGIGSGLGKTGGRGHKGQTSRSGGSIAPGFEGGQQPLH) is disordered. Positions 21–31 (RGIGSGLGKTG) are enriched in gly residues.

The protein belongs to the universal ribosomal protein uL15 family. Part of the 50S ribosomal subunit.

Binds to the 23S rRNA. This is Large ribosomal subunit protein uL15 from Ectopseudomonas mendocina (strain ymp) (Pseudomonas mendocina).